The following is a 375-amino-acid chain: Serpin B5 (375 aa).

N-linked (GlcNAc...) asparagine glycosylation is found at Asn99, Asn133, Asn188, Asn298, and Asn361.

The protein belongs to the serpin family. Ov-serpin subfamily. As to quaternary structure, interacts with IRF6.

It is found in the secreted. It localises to the extracellular space. Functionally, tumor suppressor. It blocks the growth, invasion, and metastatic properties of mammary tumors. As it does not undergo the S (stressed) to R (relaxed) conformational transition characteristic of active serpins, it exhibits no serine protease inhibitory activity. The sequence is that of Serpin B5 (Serpinb5) from Rattus norvegicus (Rat).